The primary structure comprises 258 residues: Tryptophan synthase alpha chain (258 aa).

Residues glutamate 47 and aspartate 58 each act as proton acceptor in the active site.

The protein belongs to the TrpA family. In terms of assembly, tetramer of two alpha and two beta chains.

The catalysed reaction is (1S,2R)-1-C-(indol-3-yl)glycerol 3-phosphate + L-serine = D-glyceraldehyde 3-phosphate + L-tryptophan + H2O. The protein operates within amino-acid biosynthesis; L-tryptophan biosynthesis; L-tryptophan from chorismate: step 5/5. Its function is as follows. The alpha subunit is responsible for the aldol cleavage of indoleglycerol phosphate to indole and glyceraldehyde 3-phosphate. This Bacillus thuringiensis subsp. konkukian (strain 97-27) protein is Tryptophan synthase alpha chain.